A 217-amino-acid polypeptide reads, in one-letter code: Homologous-pairing protein 2 homolog (217 aa).

Residues 84–152 (ADLHGLDASI…RLKNIKAATN (69 aa)) adopt a coiled-coil conformation. The interval 118 to 182 (TSALTTPEMQ…WRKRKRMTTE (65 aa)) is DNA-binding.

This sequence belongs to the HOP2 family. Interacts with the DNA-binding domain of the nuclear receptors NR3C1/GR, ESR2/ER-beta, THRB and RXRA. Forms a stable heterodimer with MND1. Interacts with PSMC3/TBP1. In terms of processing, phosphorylated by PKA, PKC and MAPK. As to expression, highly expressed in testis and more specifically in spermatocytes. Detected in spleen, ovary and thymus.

Its subcellular location is the nucleus. Plays an important role in meiotic recombination. Stimulates DMC1-mediated strand exchange required for pairing homologous chromosomes during meiosis. The complex PSMC3IP/MND1 binds DNA, stimulates the recombinase activity of DMC1 as well as DMC1 D-loop formation from double-strand DNA. This complex stabilizes presynaptic RAD51 and DMC1 filaments formed on single strand DNA to capture double-strand DNA. This complex stimulates both synaptic and presynaptic critical steps in RAD51 and DMC1-promoted homologous pairing. May inhibit HIV-1 viral protein TAT activity and modulate the activity of proteasomes through association with PSMC3. This chain is Homologous-pairing protein 2 homolog (Psmc3ip), found in Mus musculus (Mouse).